Here is a 125-residue protein sequence, read N- to C-terminus: Small ribosomal subunit protein uS12 (125 aa).

Asp-89 bears the 3-methylthioaspartic acid mark.

The protein belongs to the universal ribosomal protein uS12 family. In terms of assembly, part of the 30S ribosomal subunit. Contacts proteins S8 and S17. May interact with IF1 in the 30S initiation complex.

In terms of biological role, with S4 and S5 plays an important role in translational accuracy. Its function is as follows. Interacts with and stabilizes bases of the 16S rRNA that are involved in tRNA selection in the A site and with the mRNA backbone. Located at the interface of the 30S and 50S subunits, it traverses the body of the 30S subunit contacting proteins on the other side and probably holding the rRNA structure together. The combined cluster of proteins S8, S12 and S17 appears to hold together the shoulder and platform of the 30S subunit. The protein is Small ribosomal subunit protein uS12 of Clostridium kluyveri (strain ATCC 8527 / DSM 555 / NBRC 12016 / NCIMB 10680 / K1).